We begin with the raw amino-acid sequence, 406 residues long: Dual-specificity RNA methyltransferase RlmN (406 aa).

Residue Glu-121 is the Proton acceptor of the active site. Residues 127–377 form the Radical SAM core domain; it reads ERDRGTLCVS…VRTPRGRDIL (251 aa). The cysteines at positions 134 and 380 are disulfide-linked. [4Fe-4S] cluster-binding residues include Cys-141, Cys-145, and Cys-148. Residues 206–207, Ser-238, 260–262, and Asn-337 contribute to the S-adenosyl-L-methionine site; these read GE and SLH. Catalysis depends on Cys-380, which acts as the S-methylcysteine intermediate.

Belongs to the radical SAM superfamily. RlmN family. It depends on [4Fe-4S] cluster as a cofactor.

It localises to the cytoplasm. It catalyses the reaction adenosine(2503) in 23S rRNA + 2 reduced [2Fe-2S]-[ferredoxin] + 2 S-adenosyl-L-methionine = 2-methyladenosine(2503) in 23S rRNA + 5'-deoxyadenosine + L-methionine + 2 oxidized [2Fe-2S]-[ferredoxin] + S-adenosyl-L-homocysteine. The enzyme catalyses adenosine(37) in tRNA + 2 reduced [2Fe-2S]-[ferredoxin] + 2 S-adenosyl-L-methionine = 2-methyladenosine(37) in tRNA + 5'-deoxyadenosine + L-methionine + 2 oxidized [2Fe-2S]-[ferredoxin] + S-adenosyl-L-homocysteine. In terms of biological role, specifically methylates position 2 of adenine 2503 in 23S rRNA and position 2 of adenine 37 in tRNAs. m2A2503 modification seems to play a crucial role in the proofreading step occurring at the peptidyl transferase center and thus would serve to optimize ribosomal fidelity. The protein is Dual-specificity RNA methyltransferase RlmN of Azorhizobium caulinodans (strain ATCC 43989 / DSM 5975 / JCM 20966 / LMG 6465 / NBRC 14845 / NCIMB 13405 / ORS 571).